Consider the following 918-residue polypeptide: MTNYSLRARMMILILAPTVLIGLLLSIFFVVHRYNDLQRQLEDAGASIIEPLAVSTEYGMSLQNRESIGQLISVLHRRHSDIVRAISVYDENNRLFVTSNFHLDPSSMQLGSNVPFPRQLTVTRDGDIMILRTPIISESYSPDESPSSDAKNSQNMLGYIALELDLKSVRLQQYKEIFISSVMMLFCIGIALIFGWRLMRDVTGPIRNMVNTVDRIRRGQLDSRVEGFMLGELDMLKNGINSMAMSLAAYHEEMQHNIDQATSDLRETLEQMEIQNVELDLAKKRAQEAARIKSEFLANMSHELRTPLNGVIGFTRLTLKTELTPTQRDHLNTIERSANNLLAIINDVLDFSKLEAGKLILESIPFPLRSTLDEVVTLLAHSSHDKGLELTLNIKSDVPDNVIGDPLRLQQIITNLVGNAIKFTENGNIDILVEKRALSNTKVQIEVQIRDTGIGIPERDQSRLFQAFRQADASISRRHGGTGLGLVITQKLVNEMGGDISFHSQPNRGSTFWFHINLDLNPNIIIEGPSTQCLAGKRLAYVEPNSAAAQCTLDILSETPLEVVYSPTFSALPPAHYDMMLLGIAVTFREPLTMQHERLAKAVSMTDFLMLALPCHAQVNAEKLKQDGIGACLLKPLTPTRLLPALTEFCHHKQNTLLPVTDESKLAMTVMAVDDNPANLKLIGALLEDMVQHVELCDSGHQAVERAKQMPFDLILMDIQMPDMDGIRACELIHQLPHQQQTPVIAVTAHAMAGQKEKLLGAGMSDYLAKPIEEERLHNLLLRYKPGSGISSRVVTPEVNEIVVNPNATLDWQLALRQAAGKTDLARDMLQMLLDFLPEVRNKVEEQLVGENPEGLVDLIHKLHGSCGYSGVPRMKNLCQLIEQQLRSGTKEEDLEPELLELLDEMDNVAREASKILG.

The Cytoplasmic portion of the chain corresponds to 1–9 (MTNYSLRAR). A helical membrane pass occupies residues 10 to 31 (MMILILAPTVLIGLLLSIFFVV). The Periplasmic portion of the chain corresponds to 32-176 (HRYNDLQRQL…KSVRLQQYKE (145 aa)). The chain crosses the membrane as a helical span at residues 177-196 (IFISSVMMLFCIGIALIFGW). Over 197 to 918 (RLMRDVTGPI…VAREASKILG (722 aa)) the chain is Cytoplasmic. One can recognise an HAMP domain in the interval 200-252 (RDVTGPIRNMVNTVDRIRRGQLDSRVEGFMLGELDMLKNGINSMAMSLAAYHE). The Histidine kinase domain maps to 299–520 (NMSHELRTPL…TFWFHINLDL (222 aa)). The residue at position 302 (His-302) is a Phosphohistidine; by autocatalysis. The region spanning 669 to 785 (TVMAVDDNPA…RLHNLLLRYK (117 aa)) is the Response regulatory domain. Asp-718 carries the post-translational modification 4-aspartylphosphate. Residues 822–918 (KTDLARDMLQ…VAREASKILG (97 aa)) form the HPt domain. At His-861 the chain carries Phosphohistidine.

Post-translationally, activation requires a sequential transfer of a phosphate group from a His in the primary transmitter domain, to an Asp in the receiver domain and to a His in the secondary transmitter domain.

The protein resides in the cell inner membrane. The catalysed reaction is ATP + protein L-histidine = ADP + protein N-phospho-L-histidine.. Its function is as follows. Member of the two-component regulatory system UvrY/BarA involved in the regulation of carbon metabolism via the CsrA/CsrB regulatory system. Phosphorylates UvrY, probably via a four-step phosphorelay. This is Signal transduction histidine-protein kinase BarA (barA) from Escherichia coli O157:H7.